A 336-amino-acid chain; its full sequence is Potassium channel subfamily K member 1 (336 aa).

The Cytoplasmic portion of the chain corresponds to 1–20 (MLQSLAGSSCVRLVERHRSA). The chain crosses the membrane as a helical span at residues 21 to 41 (RCFGFLVLGYLLYLVFGAVVF). Topologically, residues 42–103 (SSVELPYEDL…SNASGNWNWD (62 aa)) are extracellular. Asparagine 95 carries N-linked (GlcNAc...) asparagine glycosylation. Residues 104-116 (FTSALFFASTVLS) constitute an intramembrane region (helical). An intramembrane segment occupies 117–122 (TTGYGH). The interval 117 to 122 (TTGYGH) is selectivity filter 1. At 123-132 (TVPLSDGGKA) the chain is on the extracellular side. A helical transmembrane segment spans residues 133–156 (FCIIYSVIGIPFTLLFLTAVVQRI). Residues 157-181 (TVHVTRRPVLYFHIRWGFSKQVVAI) lie on the Cytoplasmic side of the membrane. Residues 182–202 (VHAVLLGFVTVSCFFFIPAAV) form a helical membrane-spanning segment. The Extracellular segment spans residues 203 to 211 (FSVLEDDWN). An intramembrane region (helical) is located at residues 212–224 (FLESFYFCFISLS). The segment at 225-230 (TIGLGD) is selectivity filter 2. Residues 225–231 (TIGLGDY) lie within the membrane without spanning it. Residues 232–243 (VPGEGYNQKFRE) are Extracellular-facing. Residues 244-267 (LYKIGITCYLLLGLIAMLVVLETF) form a helical membrane-spanning segment. Topologically, residues 268-336 (CELHELKKFR…SACMDGPANH (69 aa)) are cytoplasmic. Lysine 274 is covalently cross-linked (Glycyl lysine isopeptide (Lys-Gly) (interchain with G-Cter in SUMO)). The important for intracellular retention in recycling endosomes stretch occupies residues 293–299 (IIEHDQL). The interval 315–336 (QKQNEPFVATQSSACMDGPANH) is disordered. Serine 326 bears the Phosphoserine mark.

Belongs to the two pore domain potassium channel (TC 1.A.1.8) family. As to quaternary structure, homodimer; disulfide-linked. Heterodimer with KCNK2; disulfide-linked. In astrocytes, forms mostly heterodimeric potassium channels with KCNK2, with only a minor proportion of functional channels containing homodimeric KCNK1. Interacts with KCNK3 and KCNK9, forming functional heterodimeric channels. Interacts with GNG4. Identified in a complex with PSD and ARF6; interacts only with PSD that is bound to ARF6. Interacts with UBE2I. Sumoylation is controversial. Sumoylated by UBE2I. Not sumoylated when expressed in xenopus oocytes or mammalian cells. Sumoylation inactivates the channel, but does not interfere with expression at the cell membrane. Sumoylation of a single subunit is sufficient to silence the dimeric channel. Sumoylation of KCNK1 is sufficient to silence heterodimeric channels formed by KCNK1 and KCNK3 or KCNK9. Desumoylated by SENP1; this activates the channel. Desumoylated by SENP1; this strongly increases halothane-mediated activation of heterodimeric channels formed with KCNK9. SENP1 treatment has no effect.

The protein localises to the cell membrane. It is found in the recycling endosome. The protein resides in the synaptic cell membrane. It localises to the cytoplasmic vesicle. Its subcellular location is the perikaryon. The protein localises to the cell projection. It is found in the dendrite. The protein resides in the apical cell membrane. It catalyses the reaction K(+)(in) = K(+)(out). The catalysed reaction is NH4(+)(in) = NH4(+)(out). It carries out the reaction Na(+)(in) = Na(+)(out). The enzyme catalyses Rb(+)(in) = Rb(+)(out). It catalyses the reaction Cs(+)(in) = Cs(+)(out). The catalysed reaction is Li(+)(in) = Li(+)(out). It carries out the reaction L-glutamate(out) = L-glutamate(in). The enzyme catalyses chloride(in) = chloride(out). Its function is as follows. Ion channel that contributes to passive transmembrane potassium transport and to the regulation of the resting membrane potential in brain astrocytes, but also in kidney and in other tissues. Forms dimeric channels through which potassium ions pass in accordance with their electrochemical gradient. The channel is selective for K(+) ions at physiological potassium concentrations and at neutral pH, but becomes permeable to Na(+) at subphysiological K(+) levels, and upon acidification of the extracellular medium. The homodimer has very low potassium channel activity, when expressed in heterologous systems, and can function as weakly inward rectifying potassium channel. Channel activity is modulated by activation of serotonin receptors. Heterodimeric channels containing KCNK1 and KCNK2 have much higher activity, and may represent the predominant form in astrocytes. Heterodimeric channels containing KCNK1 and KCNK3 or KCNK9 have much higher activity. Heterodimeric channels formed by KCNK1 and KCNK9 may contribute to halothane-sensitive currents. Mediates outward rectifying potassium currents in dentate gyrus granule cells and contributes to the regulation of their resting membrane potential. Contributes to the regulation of action potential firing in dentate gyrus granule cells and down-regulates their intrinsic excitability. In astrocytes, the heterodimer formed by KCNK1 and KCNK2 is required for rapid glutamate release in response to activation of G-protein coupled receptors, such as F2R and CNR1. Required for normal ion and water transport in the kidney. Contributes to the regulation of the resting membrane potential of pancreatic beta cells. The low channel activity of homodimeric KCNK1 may be due to sumoylation. The low channel activity may be due to rapid internalization from the cell membrane and retention in recycling endosomes. Permeable to monovalent cations with ion selectivity for K(+) &gt; Rb(+) &gt;&gt; NH4(+) &gt;&gt; Cs(+) = Na(+) = Li(+). The polypeptide is Potassium channel subfamily K member 1 (Pongo abelii (Sumatran orangutan)).